We begin with the raw amino-acid sequence, 73 residues long: uncharacterized protein (73 aa).

The signal sequence occupies residues 1 to 30; that stretch reads MVDFYFIEEKVAYRAAFTTTGKIAATLGLA.

This is an uncharacterized protein from Archaeoglobus fulgidus (strain ATCC 49558 / DSM 4304 / JCM 9628 / NBRC 100126 / VC-16).